The chain runs to 216 residues: RNA pyrophosphohydrolase (216 aa).

A Nudix hydrolase domain is found at 6–149 (GFRPNVGIIL…KRDVYQLALT (144 aa)). The Nudix box motif lies at 38 to 59 (GGIKYGETPMQAMYRELHEETG). The interval 159 to 191 (AQRTDKSRGPRAPRYPRVANGHAASETPAAIDT) is disordered.

The protein belongs to the Nudix hydrolase family. RppH subfamily. The cofactor is a divalent metal cation.

Accelerates the degradation of transcripts by removing pyrophosphate from the 5'-end of triphosphorylated RNA, leading to a more labile monophosphorylated state that can stimulate subsequent ribonuclease cleavage. This is RNA pyrophosphohydrolase from Burkholderia pseudomallei (strain 668).